Consider the following 219-residue polypeptide: Ribose-5-phosphate isomerase A (219 aa).

Substrate-binding positions include 28-31 (TGST), 81-84 (DGAD), and 94-97 (KGGG). The active-site Proton acceptor is Glu103. Position 121 (Lys121) interacts with substrate.

This sequence belongs to the ribose 5-phosphate isomerase family. As to quaternary structure, homodimer.

The catalysed reaction is aldehydo-D-ribose 5-phosphate = D-ribulose 5-phosphate. Its pathway is carbohydrate degradation; pentose phosphate pathway; D-ribose 5-phosphate from D-ribulose 5-phosphate (non-oxidative stage): step 1/1. Functionally, catalyzes the reversible conversion of ribose-5-phosphate to ribulose 5-phosphate. In Shigella boydii serotype 18 (strain CDC 3083-94 / BS512), this protein is Ribose-5-phosphate isomerase A.